A 322-amino-acid polypeptide reads, in one-letter code: Breast cancer metastasis-suppressor 1-like protein (322 aa).

Residues 1–16 (MPVHSREKKESNHNDM) are compositionally biased toward basic and acidic residues. Positions 1–56 (MPVHSREKKESNHNDMEVDYPENEGSSSEEDDSDSSSGSEEGDSSEMDDEDCERRR) are disordered. Over residues 17-51 (EVDYPENEGSSSEEDDSDSSSGSEEGDSSEMDDED) the composition is skewed to acidic residues. Coiled coils occupy residues 50–99 (EDCE…QAQE) and 147–178 (EKLL…ITSE).

This sequence belongs to the BRMS1 family.

It localises to the nucleus. Its function is as follows. Involved in the histone deacetylase (HDAC1)-dependent transcriptional repression activity. This chain is Breast cancer metastasis-suppressor 1-like protein (brms1l), found in Xenopus laevis (African clawed frog).